The chain runs to 921 residues: AdoMet-dependent rRNA methyltransferase SPB1 (921 aa).

The S-adenosyl-L-methionine site is built by Gly58, Trp60, Asp78, Asp94, and Asp119. The active-site Proton acceptor is the Lys159. A coiled-coil region spans residues 367 to 414; it reads VEEMDEDDQIDDELARLNEEAARKARKERRRKNELRQKKILKMQLQMT. Disordered stretches follow at residues 448–476, 491–604, 635–713, 814–835, and 866–921; these read ALIQ…DPET, EFKQ…KRSL, ELDE…GKQK, LEKA…EKEK, and RGLK…GPRN. A compositionally biased stretch (basic and acidic residues) spans 491–522; it reads EFKQKQSERDAKFRAKQARLQDAKNDSWHGIK. Composition is skewed to acidic residues over residues 523-542, 555-568, 635-684, and 697-708; these read DDEE…ESEG, ETFD…EEDE, ELDE…DDFE, and DEEWDLNGEDEE. Positions 796–835 form a coiled coil; sequence IKKVAEAKARKKMRTLRRLEKAQKKAETINENEDISEKEK. Basic and acidic residues predominate over residues 814-823; it reads LEKAQKKAET. Basic residues predominate over residues 868-879; it reads LKGRPKGTKGRY. Positions 880 to 892 are enriched in basic and acidic residues; that stretch reads KMVDPRMKKELRA.

Belongs to the class I-like SAM-binding methyltransferase superfamily. RNA methyltransferase RlmE family. SPB1 subfamily. In terms of assembly, component of the nucleolar and nucleoplasmic pre-60S ribosomal particle.

The protein localises to the nucleus. Its subcellular location is the nucleolus. It catalyses the reaction a ribonucleotide in rRNA + S-adenosyl-L-methionine = a 2'-O-methylribonucleotide in rRNA + S-adenosyl-L-homocysteine + H(+). Required for proper assembly of pre-ribosomal particles during the biogenesis of the 60S ribosomal subunit. The chain is AdoMet-dependent rRNA methyltransferase SPB1 from Mycosarcoma maydis (Corn smut fungus).